The sequence spans 360 residues: Mannonate dehydratase (360 aa).

This sequence belongs to the mannonate dehydratase family. It depends on Fe(2+) as a cofactor. Requires Mn(2+) as cofactor.

The enzyme catalyses D-mannonate = 2-dehydro-3-deoxy-D-gluconate + H2O. The protein operates within carbohydrate metabolism; pentose and glucuronate interconversion. Catalyzes the dehydration of D-mannonate. The chain is Mannonate dehydratase (uxuA) from Thermotoga maritima (strain ATCC 43589 / DSM 3109 / JCM 10099 / NBRC 100826 / MSB8).